Here is a 100-residue protein sequence, read N- to C-terminus: MRLSPHEQERLLLSYAAELARRRQARGLKLNHPEAVALITDHVLEGARDGRSVAELMASGRTVLTRDDVMTGVPEMIHDVQVEATFPDGTKLVTVHQPIA.

This sequence belongs to the urease gamma subunit family. Heterotrimer of UreA (gamma), UreB (beta) and UreC (alpha) subunits. Three heterotrimers associate to form the active enzyme.

The protein localises to the cytoplasm. It catalyses the reaction urea + 2 H2O + H(+) = hydrogencarbonate + 2 NH4(+). The protein operates within nitrogen metabolism; urea degradation; CO(2) and NH(3) from urea (urease route): step 1/1. This chain is Urease subunit gamma, found in Nocardia farcinica (strain IFM 10152).